Consider the following 149-residue polypeptide: Ribonuclease H (149 aa).

Positions 5-146 (QRPHVVIFTD…ADELAREGLA (142 aa)) constitute an RNase H type-1 domain. Residues aspartate 14, glutamate 52, aspartate 74, and aspartate 138 each coordinate Mg(2+).

This sequence belongs to the RNase H family. In terms of assembly, monomer. Requires Mg(2+) as cofactor.

It localises to the cytoplasm. The enzyme catalyses Endonucleolytic cleavage to 5'-phosphomonoester.. In terms of biological role, endonuclease that specifically degrades the RNA of RNA-DNA hybrids. This Afipia carboxidovorans (strain ATCC 49405 / DSM 1227 / KCTC 32145 / OM5) (Oligotropha carboxidovorans) protein is Ribonuclease H.